The sequence spans 209 residues: Casparian strip membrane protein 1 (209 aa).

Over 1–46 (MEKSESTKIDVVETNKERKGKAPLLGKAPVVAAAVVHAKGGGAKRG) the chain is Cytoplasmic. A helical transmembrane segment spans residues 47–67 (IAIFDLILRIAAFASALGAAV). The Extracellular portion of the chain corresponds to 68-96 (AMATTEETLPFFTQFFQFEASYDDLPTFT). The helical transmembrane segment at 97-117 (FFVVAMAIVVAYLVLSVPFSI) threads the bilayer. Residues 118-129 (VCIVRPHAVVPR) are Cytoplasmic-facing. Residues 130–150 (LLLIIFDTVIIALTTGAAGSS) traverse the membrane as a helical segment. At 151–179 (AAIVYLAHNGNQDANWLAICQQFGDFCQR) the chain is on the extracellular side. Residues 180-200 (VSGAVVAAFVTVVILIFLVVL) form a helical membrane-spanning segment. Topologically, residues 201–209 (SASALRRHH) are cytoplasmic.

It belongs to the Casparian strip membrane proteins (CASP) family. Homodimer and heterodimers.

It is found in the cell membrane. Functionally, regulates membrane-cell wall junctions and localized cell wall deposition. Required for establishment of the Casparian strip membrane domain (CSD) and the subsequent formation of Casparian strips, a cell wall modification of the root endodermis that determines an apoplastic barrier between the intraorganismal apoplasm and the extraorganismal apoplasm and prevents lateral diffusion. In Nicotiana tabacum (Common tobacco), this protein is Casparian strip membrane protein 1.